The primary structure comprises 859 residues: Pre-mRNA-splicing factor SYF1 (859 aa).

14 HAT repeats span residues 17–49, 52–84, 88–108, 123–157, 177–219, 238–271, 427–459, 461–482, 520–554, 599–633, 639–675, 685–718, 720–754, and 756–790; these read NIRN…YWKE, RTDK…WEST, VETS…VRDC, YDLA…FVEE, DEAE…ERYL, RDNI…FELN, VYSE…LYWR, NAIS…PYIE, ILLE…YLEA, YEVM…VATS, LSPE…FEER, EILR…KAES, LGPS…FESS, and GETI…FELK.

The protein belongs to the crooked-neck family. As to quaternary structure, belongs to the NTC complex (or PRP19-associated complex), composed of at least CEF1, CLF1, ISY1, NTC20, SNT309, SYF1, SYF2, and PRP19. The NTC complex associates with the spliceosome after the release of the U1 and U4 snRNAs and forms the CWC spliceosome subcomplex (or CEF1-associated complex) reminiscent of a late-stage spliceosome composed also of the U2, U5 and U6 snRNAs and at least BUD13, BUD31, BRR2, CDC40, CUS1, CWC2, CWC15, CWC21, CWC22, CWC23, CWC24, CWC25, CWC27, ECM2, HSH155, IST3, LEA1, MSL1, PRP8, PRP9, PRP11, PRP21, PRP22, PRP45, PRP46, SLU7, SMB1, SMD1, SMD2, SMD3, SMX2, SMX3, SNU114, SPP2, RSE1 and YJU2. Interacts with CEF1, CLF1, ISY1, NTC20, PRP22, PRP46 and SYF2.

Its subcellular location is the nucleus. Its function is as follows. Involved in pre-mRNA splicing and cell cycle control. As a component of the NTC complex (or PRP19-associated complex), associates to the spliceosome to mediate conformational rearrangement or to stabilize the structure of the spliceosome after U4 snRNA dissociation, which leads to spliceosome maturation. The chain is Pre-mRNA-splicing factor SYF1 (SYF1) from Saccharomyces cerevisiae (strain ATCC 204508 / S288c) (Baker's yeast).